Consider the following 513-residue polypeptide: 2-isopropylmalate synthase (513 aa).

A Pyruvate carboxyltransferase domain is found at 5–267 (LVIFDTTLRD…ETRIDTTQIV (263 aa)). Mn(2+) contacts are provided by D14, H202, H204, and N238. Residues 393 to 513 (KLVYSRVCSE…LDKVKAQGGV (121 aa)) are regulatory domain.

It belongs to the alpha-IPM synthase/homocitrate synthase family. LeuA type 1 subfamily. In terms of assembly, homodimer. Mn(2+) serves as cofactor.

The protein localises to the cytoplasm. It carries out the reaction 3-methyl-2-oxobutanoate + acetyl-CoA + H2O = (2S)-2-isopropylmalate + CoA + H(+). It functions in the pathway amino-acid biosynthesis; L-leucine biosynthesis; L-leucine from 3-methyl-2-oxobutanoate: step 1/4. Its function is as follows. Catalyzes the condensation of the acetyl group of acetyl-CoA with 3-methyl-2-oxobutanoate (2-ketoisovalerate) to form 3-carboxy-3-hydroxy-4-methylpentanoate (2-isopropylmalate). This is 2-isopropylmalate synthase from Dechloromonas aromatica (strain RCB).